Consider the following 88-residue polypeptide: Molybdopterin synthase sulfur carrier subunit (88 aa).

Position 88 is a 1-thioglycine; alternate (Gly88). Gly88 is modified (glycyl adenylate; alternate).

The protein belongs to the MoaD family. MOCS2A subfamily. Heterotetramer; composed of 2 small (MOCS2A) and 2 large (MOCS2B) subunits. In terms of processing, C-terminal thiocarboxylation occurs in 2 steps, it is first acyl-adenylated (-COAMP) via the hesA/moeB/thiF part of uba4, then thiocarboxylated (-COSH) via the rhodanese domain of uba4.

It localises to the cytoplasm. Its pathway is cofactor biosynthesis; molybdopterin biosynthesis. Its function is as follows. Acts as a sulfur carrier required for molybdopterin biosynthesis. Component of the molybdopterin synthase complex that catalyzes the conversion of precursor Z into molybdopterin by mediating the incorporation of 2 sulfur atoms into precursor Z to generate a dithiolene group. In the complex, serves as sulfur donor by being thiocarboxylated (-COSH) at its C-terminus by uba4. After interaction with MOCS2B, the sulfur is then transferred to precursor Z to form molybdopterin. This Aspergillus niger (strain ATCC MYA-4892 / CBS 513.88 / FGSC A1513) protein is Molybdopterin synthase sulfur carrier subunit.